Here is a 598-residue protein sequence, read N- to C-terminus: Nuclear receptor subfamily 4 group A member 1 (598 aa).

Disordered regions lie at residues 1–43 (MPCI…PEAA) and 128–151 (GSDYYGSPCSAPSPSTPSFQPPQL). A compositionally biased stretch (low complexity) spans 134-145 (SPCSAPSPSTPS). The required for nuclear import stretch occupies residues 171–466 (RAWTEQLPKA…PAEGKLIFCS (296 aa)). A DNA-binding region (nuclear receptor) is located at residues 264–339 (EGRCAVCGDN…VGMVKEVVRT (76 aa)). 2 consecutive NR C4-type zinc fingers follow at residues 267–287 (CAVCGDNASCQHYGVRTCEGC) and 303–327 (CLANKDCPVDKRRRNRCQFCRFQKC). The segment at 268–354 (AVCGDNASCQ…RRGRLPSKPK (87 aa)) is required for binding NBRE-containing DNA. The interval 299–361 (AKYICLANKD…KPKQPPETSP (63 aa)) is required for the interaction with RXRA. Residue S341 is modified to Phosphoserine; by PKA. Residues 341 to 361 (SLKGRRGRLPSKPKQPPETSP) form a disordered region. At S351 the chain carries Phosphoserine; by PKA, RPS6KA1 and RPS6KA3. In terms of domain architecture, NR LBD spans 360–595 (SPAHLLTSLV…PIVDKIFMDT (236 aa)). The tract at residues 521–544 (PRRVEELQNRIASCLKEHVSAEAG) is binds lipopolysaccharide. An AF-2 region spans residues 584–595 (PPPIVDKIFMDT).

Belongs to the nuclear hormone receptor family. NR4 subfamily. Binds the NGFI-B response element (NBRE) as a monomer. Binds the Nur response element (NurRE), consisting of two inverse NBRE-related octanucleotide repeats separated by 6 base-pairs, as a dimer. Interacts (via N-terminus) with NLRP3 (via LRR repeat domain); the interaction is direct, requires binding of NR4A1/Nur77 to NBRE-containing dsDNA and lipopolysaccharide, and leads to non-canonical NLRP3 inflammasome activation. Interacts with GADD45GIP1. Interacts with STK11. Interacts with IFI27. Heterodimer (via DNA-binding domain) with RXRA (via C-terminus); DNA-binding of the heterodimer is enhanced by 9-cis retinoic acid. Competes for the RXRA interaction with EP300 and thereby attenuates EP300 mediated acetylation of RXRA. Interacts with NCOA1. Interacts with NCOA2. Interacts with NCOA3. The cofactor is Zn(2+). Post-translationally, phosphorylated at Ser-351 by RPS6KA1 and RPS6KA3 in response to mitogenic or stress stimuli. Acetylated by p300/CBP, acetylation increases stability. Deacetylated by HDAC1.

The protein localises to the nucleus. The protein resides in the cytoplasm. It localises to the cytosol. It is found in the mitochondrion. Its function is as follows. Orphan nuclear receptor. Binds the NGFI-B response element (NBRE) 5'-AAAGGTCA-3'. Binds 9-cis-retinoic acid outside of its ligand-binding (NR LBD) domain. Participates in energy homeostasis by sequestrating the kinase STK11 in the nucleus, thereby attenuating cytoplasmic AMPK activation. Regulates the inflammatory response in macrophages by regulating metabolic adaptations during inflammation, including repressing the transcription of genes involved in the citric acid cycle (TCA). Inhibits NF-kappa-B signaling by binding to low-affinity NF-kappa-B binding sites, such as at the IL2 promoter. May act concomitantly with NR4A2 in regulating the expression of delayed-early genes during liver regeneration. Plays a role in the vascular response to injury. In the cytosol, upon its detection of both bacterial lipopolysaccharide (LPS) and NBRE-containing mitochondrial DNA released by GSDMD pores during pyroptosis, it promotes non-canonical NLRP3 inflammasome activation by stimulating association of NLRP3 and NEK7. The sequence is that of Nuclear receptor subfamily 4 group A member 1 (NR4A1) from Bos taurus (Bovine).